Here is a 638-residue protein sequence, read N- to C-terminus: ATP-dependent rRNA helicase spb4 (638 aa).

A Q motif motif is present at residues Trp14 to Ala42. The region spanning Ile45 to Val249 is the Helicase ATP-binding domain. ATP is bound at residue Ala58–Thr65. The DEAD box signature appears at Asp197–Asp200. The Helicase C-terminal domain occupies Ala283–Thr437. Composition is skewed to basic and acidic residues over residues Leu534–Thr554 and Gln577–Arg615. The interval Leu534–Asp638 is disordered. Positions Arg566–Ala619 form a coiled coil.

It belongs to the DEAD box helicase family. DDX55/SPB4 subfamily. Component of pre-60S ribosomal complexes.

Its subcellular location is the nucleus. The protein localises to the nucleolus. The enzyme catalyses ATP + H2O = ADP + phosphate + H(+). Functionally, ATP-binding RNA helicase involved in the biogenesis of 60S ribosomal subunits. Binds 90S pre-ribosomal particles and dissociates from pre-60S ribosomal particles after processing of 27SB pre-rRNA. Required for the normal formation of 18S rRNA through the processing of pre-rRNAs at sites A0, A1 and A2, and the normal formation of 25S and 5.8S rRNAs through the processing of pre-rRNAs at sites C1 and C2. In Aspergillus oryzae (strain ATCC 42149 / RIB 40) (Yellow koji mold), this protein is ATP-dependent rRNA helicase spb4.